We begin with the raw amino-acid sequence, 220 residues long: Pyridoxine/pyridoxamine 5'-phosphate oxidase (220 aa).

FMN contacts are provided by residues 49–54 (RMVLLK), 68–69 (YT), Lys-75, and Gln-97. Lys-54 serves as a coordination point for substrate. Positions 115, 119, and 123 each coordinate substrate. FMN-binding positions include 132–133 (QS) and Trp-176. Position 182 to 184 (182 to 184 (RLH)) interacts with substrate. An FMN-binding site is contributed by Arg-186.

It belongs to the pyridoxamine 5'-phosphate oxidase family. Homodimer. Requires FMN as cofactor.

It carries out the reaction pyridoxamine 5'-phosphate + O2 + H2O = pyridoxal 5'-phosphate + H2O2 + NH4(+). It catalyses the reaction pyridoxine 5'-phosphate + O2 = pyridoxal 5'-phosphate + H2O2. It participates in cofactor metabolism; pyridoxal 5'-phosphate salvage; pyridoxal 5'-phosphate from pyridoxamine 5'-phosphate: step 1/1. It functions in the pathway cofactor metabolism; pyridoxal 5'-phosphate salvage; pyridoxal 5'-phosphate from pyridoxine 5'-phosphate: step 1/1. Its function is as follows. Catalyzes the oxidation of either pyridoxine 5'-phosphate (PNP) or pyridoxamine 5'-phosphate (PMP) into pyridoxal 5'-phosphate (PLP). This chain is Pyridoxine/pyridoxamine 5'-phosphate oxidase, found in Paracoccus denitrificans (strain Pd 1222).